The following is a 235-amino-acid chain: Ribitol-5-phosphate cytidylyltransferase (235 aa).

Residues 7–10 (LAGG), 82–88 (GADRNTS), and Ser-113 contribute to the CTP site.

This sequence belongs to the IspD/TarI cytidylyltransferase family. TarI subfamily.

It carries out the reaction D-ribitol 5-phosphate + CTP + H(+) = CDP-L-ribitol + diphosphate. It functions in the pathway cell wall biogenesis; poly(ribitol phosphate) teichoic acid biosynthesis. In terms of biological role, catalyzes the transfer of the cytidylyl group of CTP to D-ribitol 5-phosphate. This is Ribitol-5-phosphate cytidylyltransferase from Streptococcus pneumoniae serotype 19F (strain G54).